Reading from the N-terminus, the 358-residue chain is uncharacterized protein (358 aa).

This is an uncharacterized protein from Klebsiella pneumoniae.